The primary structure comprises 257 residues: MPLAKRIIPCLDVDKGRVVKGVQFVDIRDAGDPVEVAKKYNEQGADEITFLDITASVEGRETTVQTVEKIAAEVFIPLTVGGGIRTLEDIRTMLNAGADKVSINSAAVKDPEFVKAAAEGFGSQCIVVAIDAKKVSAEGEPPRWEIFTHGGRKPTGIDAIEWAIRMTDYGAGEILLTSMDKDGTKDGFDLAVTRAIADAVPVPVIASGGVGNLQHLVDGVIEGGADAVLAASIFHFGEYTVPQAKEYMQERGVEVRL.

Catalysis depends on residues D12 and D131.

It belongs to the HisA/HisF family. As to quaternary structure, heterodimer of HisH and HisF.

It localises to the cytoplasm. It catalyses the reaction 5-[(5-phospho-1-deoxy-D-ribulos-1-ylimino)methylamino]-1-(5-phospho-beta-D-ribosyl)imidazole-4-carboxamide + L-glutamine = D-erythro-1-(imidazol-4-yl)glycerol 3-phosphate + 5-amino-1-(5-phospho-beta-D-ribosyl)imidazole-4-carboxamide + L-glutamate + H(+). It functions in the pathway amino-acid biosynthesis; L-histidine biosynthesis; L-histidine from 5-phospho-alpha-D-ribose 1-diphosphate: step 5/9. In terms of biological role, IGPS catalyzes the conversion of PRFAR and glutamine to IGP, AICAR and glutamate. The HisF subunit catalyzes the cyclization activity that produces IGP and AICAR from PRFAR using the ammonia provided by the HisH subunit. This chain is Imidazole glycerol phosphate synthase subunit HisF, found in Saccharophagus degradans (strain 2-40 / ATCC 43961 / DSM 17024).